The primary structure comprises 459 residues: MVEHDSSDESVNRRKYLKALTVGAAAGIAGCTGGGGTETESTESGNGNGSGGSTDDTETSGSSSGESWDSQLEVLHGWAGGDGEAAVTALIEAFEEEHPEMDTNFQAVGASANVNLNATILRRLANNNPMSSFANWPGKNLERYSGALMDLEADVWDAEGFKDTMQSRAVELCKFNDKMPAVPIGSHRMNNLFYNTAVFEEAGIDASSLDSVDALLDALETIDQNTDVTPMAQAMVAPWTNLQLWAQILTSQSGVEAYTNFIEGNPDRAAVVEALEALKTINENYITADASSISFTTAGQKVISGKAATIHQGNWVYGMFRADDSFNYKEQWDWIPFPGTEGIYFYHVDSIVAPSNNPSREETIAWQKFVGSKKAQIAFNNPKGSVPLRTDIDPSELTDFLAMTYEDLTDSEAYPPTIAHGLAVTPKTMGACKTAFGDNFMGPFNVEATADALVAAVSE.

A helical membrane pass occupies residues 19 to 36 (ALTVGAAAGIAGCTGGGG). Residues 27–68 (GIAGCTGGGGTETESTESGNGNGSGGSTDDTETSGSSSGESW) form a disordered region.

The protein belongs to the bacterial solute-binding protein 1 family. The complex is composed of two ATP-binding proteins (XacJ and XacK), two transmembrane proteins (XacH and XacI) and a solute-binding protein (XacG).

Its subcellular location is the cell membrane. In terms of biological role, part of the ABC transporter complex XacGHIJK involved in the uptake of xylose and arabinose. The chain is Xylose/arabinose-binding protein XacG from Haloferax volcanii (strain ATCC 29605 / DSM 3757 / JCM 8879 / NBRC 14742 / NCIMB 2012 / VKM B-1768 / DS2) (Halobacterium volcanii).